The following is a 148-amino-acid chain: Lysozyme-like protein 1 (148 aa).

The N-terminal stretch at 1–19 (MKSVGVFALIISFSIVAES) is a signal peptide. One can recognise a C-type lysozyme domain in the interval 20 to 148 (KIYTRCKLAK…SEWKRGCEVS (129 aa)). Cystine bridges form between Cys25–Cys145, Cys49–Cys133, Cys83–Cys98, and Cys94–Cys112. Glu54 is a catalytic residue. Asn58 carries N-linked (GlcNAc...) asparagine glycosylation. Residue Asp71 is part of the active site.

It belongs to the glycosyl hydrolase 22 family. As to quaternary structure, monomer.

It localises to the secreted. The catalysed reaction is Hydrolysis of (1-&gt;4)-beta-linkages between N-acetylmuramic acid and N-acetyl-D-glucosamine residues in a peptidoglycan and between N-acetyl-D-glucosamine residues in chitodextrins.. This Mus musculus (Mouse) protein is Lysozyme-like protein 1 (Lyzl1).